Here is a 460-residue protein sequence, read N- to C-terminus: Nucleosome assembly protein 1-like 2 (460 aa).

Composition is skewed to basic and acidic residues over residues 1–11 and 27–36; these read MAESENRKELS and LGEHLERGED. Disordered regions lie at residues 1–88 and 214–238; these read MAES…ADRP and EEEEEEEEDDIEATGEENKEEEDPK. Residues 214–236 show a composition bias toward acidic residues; sequence EEEEEEEEDDIEATGEENKEEED. Positions 346–352 match the Nuclear localization signal motif; it reads IKKKQKH.

It belongs to the nucleosome assembly protein (NAP) family.

It localises to the nucleus. Functionally, acidic protein which may be involved in interactions with other proteins or DNA. This chain is Nucleosome assembly protein 1-like 2 (NAP1L2), found in Homo sapiens (Human).